Reading from the N-terminus, the 956-residue chain is ATPase 11, plasma membrane-type (956 aa).

At 1 to 65 the chain is on the cytoplasmic side; it reads MGDKEEVLEA…EKKESKFLKF (65 aa). A helical transmembrane segment spans residues 66 to 85; it reads LGFMWNPLSWVMEAAAIMAI. Over 86–97 the chain is Extracellular; that stretch reads ALANGGGKPPDW. A helical membrane pass occupies residues 98-118; that stretch reads QDFVGIITLLVINSTISFIEE. Residues 119–247 lie on the Cytoplasmic side of the membrane; the sequence is NNAGNAAAAL…GHFQQVLTAI (129 aa). Residues 248 to 268 form a helical membrane-spanning segment; sequence GNFCICSIAVGMIIEIVVMYP. At 269-277 the chain is on the extracellular side; it reads IQHRAYRPG. The chain crosses the membrane as a helical span at residues 278–295; sequence IDNLLVLLIGGIPIAMPT. The Cytoplasmic segment spans residues 296 to 647; that stretch reads VLSVTMAIGS…TSRAIFQRMK (352 aa). D333 serves as the catalytic 4-aspartylphosphate intermediate. Mg(2+) is bound by residues D592 and D596. A helical membrane pass occupies residues 648 to 669; that stretch reads NYTIYAVSITIRIVLGFMLLAL. Topologically, residues 670-674 are extracellular; sequence IWKFD. Residues 675-697 traverse the membrane as a helical segment; it reads FPPFMVLIIAILNDGTIMTISKD. Residues 698-713 lie on the Cytoplasmic side of the membrane; sequence RVKPSPLPDSWKLSEI. Residues 714 to 734 traverse the membrane as a helical segment; that stretch reads FATGVVFGSYMAMMTVIFFWA. The Extracellular segment spans residues 735–759; it reads AYKTDFFPRTFGVSTLEKTAHDDFR. Residues 760 to 780 traverse the membrane as a helical segment; the sequence is KLASAIYLQVSIISQALIFVT. At 781 to 792 the chain is on the cytoplasmic side; it reads RSRSWSYVERPG. A helical membrane pass occupies residues 793–813; sequence MLLVVAFILAQLVATLIAVYA. Topologically, residues 814–821 are extracellular; it reads NWSFAAIE. A helical transmembrane segment spans residues 822–842; the sequence is GIGWGWAGVIWLYNIVFYIPL. Topologically, residues 843 to 956 are cytoplasmic; sequence DIIKFLIRYA…IETIQQAYTV (114 aa). Residue T889 is modified to Phosphothreonine. S938 carries the post-translational modification Phosphoserine. The segment at 954–956 is interaction with 14-3-3 proteins; it reads YTV. Phosphothreonine is present on T955.

The protein belongs to the cation transport ATPase (P-type) (TC 3.A.3) family. Type IIIA subfamily. As to quaternary structure, binds to 14-3-3 proteins. The binding is induced by phosphorylation of Thr-955. Binding to 14-3-3 proteins activates the H(+)-ATPase. As to expression, expressed in guard cells, mesophyll cells, leaves and roots.

It is found in the membrane. The enzyme catalyses ATP + H2O + H(+)(in) = ADP + phosphate + 2 H(+)(out). Its function is as follows. The plasma membrane H(+) ATPase of plants and fungi generates a proton gradient that drives the active transport of nutrients by H(+)-symport. The resulting external acidification and/or internal alkinization may mediate growth responses. This Arabidopsis thaliana (Mouse-ear cress) protein is ATPase 11, plasma membrane-type (AHA11).